The sequence spans 215 residues: Beta-crystallin A3-2 (215 aa).

The segment at 1–30 (MEIPAIQTEREDITSEKMAQINPLPVPLGP) is N-terminal arm. Beta/gamma crystallin 'Greek key' domains follow at residues 31–70 (WKIT…KVEC) and 71–117 (GAWI…RPIC). A connecting peptide region spans residues 118–123 (SANHEE). 2 consecutive Beta/gamma crystallin 'Greek key' domains span residues 124–165 (SKLV…KVQC) and 166–214 (GAWV…RRIQ).

Belongs to the beta/gamma-crystallin family. In terms of assembly, homo/heterodimer, or complexes of higher-order. The structure of beta-crystallin oligomers seems to be stabilized through interactions between the N-terminal arms. Post-translationally, the N-terminus is blocked.

Crystallins are the dominant structural components of the vertebrate eye lens. In Aquarana catesbeiana (American bullfrog), this protein is Beta-crystallin A3-2.